We begin with the raw amino-acid sequence, 365 residues long: tRNA/tmRNA (uracil-C(5))-methyltransferase (365 aa).

S-adenosyl-L-methionine contacts are provided by Q189, Y217, N222, E238, and D298. C323 functions as the Nucleophile in the catalytic mechanism. The active-site Proton acceptor is E357.

This sequence belongs to the class I-like SAM-binding methyltransferase superfamily. RNA M5U methyltransferase family. TrmA subfamily.

The catalysed reaction is uridine(54) in tRNA + S-adenosyl-L-methionine = 5-methyluridine(54) in tRNA + S-adenosyl-L-homocysteine + H(+). It carries out the reaction uridine(341) in tmRNA + S-adenosyl-L-methionine = 5-methyluridine(341) in tmRNA + S-adenosyl-L-homocysteine + H(+). Functionally, dual-specificity methyltransferase that catalyzes the formation of 5-methyluridine at position 54 (m5U54) in all tRNAs, and that of position 341 (m5U341) in tmRNA (transfer-mRNA). This is tRNA/tmRNA (uracil-C(5))-methyltransferase from Shewanella sp. (strain W3-18-1).